A 312-amino-acid chain; its full sequence is MEGEGSRVVALYDGNGAITETKKSPFSVKVGLAQMLRGGVIMDVVNADQARIAEEAGACAVMALERVPADIRAQGGVARMSDPQLIKEIKRAVTIPVMAKARIGHFVEAQILEAIGIDYVDESEVLTLADDANHINKHNFRIPFVCGCRNLGEALRRIREGAAMIRTKGEAGTGNIIEAVRHVRSVMSDIRVLRNMDDDEVFTFAKSIAAPYDLVMQTKQLGRLPVVHFAAGGVATPADAALMMQLGCDGVFVGSGVFKSGDPAKRARAIVQAVTHYSDPEILAEVSCGLGEAMVGINLSDTNVERFANRSE.

D43 is a binding site for D-ribose 5-phosphate. K100 acts as the Schiff-base intermediate with D-ribose 5-phosphate in catalysis. G172 lines the D-ribose 5-phosphate pocket. R184 provides a ligand contact to D-glyceraldehyde 3-phosphate. D-ribose 5-phosphate-binding positions include G233 and 254–255; that span reads GS.

This sequence belongs to the PdxS/SNZ family.

The enzyme catalyses aldehydo-D-ribose 5-phosphate + D-glyceraldehyde 3-phosphate + L-glutamine = pyridoxal 5'-phosphate + L-glutamate + phosphate + 3 H2O + H(+). It functions in the pathway cofactor biosynthesis; pyridoxal 5'-phosphate biosynthesis. Catalyzes the formation of pyridoxal 5'-phosphate from ribose 5-phosphate (RBP), glyceraldehyde 3-phosphate (G3P) and ammonia. The ammonia is provided by PDX2. Can also use ribulose 5-phosphate and dihydroxyacetone phosphate as substrates, resulting from enzyme-catalyzed isomerization of RBP and G3P, respectively. Also plays an indirect role in resistance to singlet oxygen-generating photosensitizers. The polypeptide is Pyridoxal 5'-phosphate synthase subunit PDX1 (PDX1) (Phaseolus vulgaris (Kidney bean)).